The chain runs to 167 residues: MLVLLAFIIAFHITSAALLFIATVDNAWWVGDEFFADVWRICTNNTNCTVINDSFQEYSTLQAVQATMILSTILCCIAFFIFVLQLFRLKQGERFVLTSIIQLMSCLCVMIAASIYTDRREDIHDKNAKFYPVTREGSYGYSYILAWVAFACTFISGMMYLILRKRK.

Residues 1–21 (MLVLLAFIIAFHITSAALLFI) form a helical membrane-spanning segment. 3 N-linked (GlcNAc...) asparagine glycosylation sites follow: asparagine 44, asparagine 47, and asparagine 52. The next 3 membrane-spanning stretches (helical) occupy residues 67 to 87 (TMIL…LQLF), 95 to 115 (FVLT…AASI), and 143 to 163 (YILA…YLIL).

This sequence belongs to the PMP-22/EMP/MP20 family. In terms of assembly, interacts with PTK2; regulates PTK2 activation and localization. Interacts with ITGB3; regulates the levels of the heterodimer ITGA5-ITGB3 integrin surface expression. Interacts with P2RX7 (via C-terminus). Interacts with ITGB1; the interaction may be direct or indirect and ITGB1 has a heterodimer form. Expressed in ciliary body epithelia, sclera, cornea, and retinal pigment epithelium (at protein level). Expressed in lung and endometrial tissue; expression is particularly abundant in secretory endometrium (at protein level). Expressed in placental villous syncytiotrophoblasts and cytotrophoblasts and on the membrane of interstitial trophoblasts (at protein level).

Its subcellular location is the golgi apparatus membrane. It is found in the cell membrane. The protein localises to the apical cell membrane. It localises to the membrane raft. The protein resides in the cytoplasm. Its subcellular location is the nucleus. It is found in the perinuclear region. In terms of biological role, functions as a key regulator of cell membrane composition by regulating protein surface expression. Also, plays a role in regulation of processes including cell migration, cell proliferation, cell contraction and cell adhesion. Regulates transepithelial migration of neutrophils into the alveolar lumen, potentially via mediation of cell surface expression of adhesion markers and lipid raft formation. Negatively regulates caveolae formation by reducing CAV1 expression and CAV1 amount by increasing lysosomal degradation. Facilitates surface trafficking and formation of lipid rafts bearing GPI-anchor proteins. Regulates surface expression of MHC1 and ICAM1 proteins increasing susceptibility to T-cell mediated cytotoxicity. Regulates the plasma membrane expression of the integrin heterodimers ITGA6-ITGB1, ITGA5-ITGB3 and ITGA5-ITGB1 resulting in modulation of cell-matrix adhesion. Also regulates many processes through PTK2. Regulates blood vessel endothelial cell migration and angiogenesis by regulating VEGF protein expression through PTK2 activation. Regulates cell migration and cell contraction through PTK2 and SRC activation. Regulates focal adhesion density, F-actin conformation and cell adhesion capacity through interaction with PTK2. Positively regulates cell proliferation. Plays a role during cell death and cell blebbing. Promotes angiogenesis and vasculogenesis through induction of VEGFA via a HIF1A-dependent pathway. Also plays a role in embryo implantation by regulating surface trafficking of integrin heterodimer ITGA5-ITGB3. Plays a role in placental angiogenesis and uterine natural killer cell regulation at the maternal-fetal placental interface, however not required in the maternal tissues for a viable pregnancy. Involved in the early stages of embryogenic development and cardiogenesis, potentially via regulation of epithelial-mesenchymal transition timing. May play a role in glomerular filtration. This is Epithelial membrane protein 2 (EMP2) from Homo sapiens (Human).